The sequence spans 242 residues: Cytochrome c oxidase subunit 2 (242 aa).

Over 1-30 (MSFYGSRYFGDIVHGELGKDLFRYHGFVMM) the chain is Mitochondrial intermembrane. A helical transmembrane segment spans residues 31–47 (VAVAVLVFVMYMGCVIL). Residues 48-66 (FTKFSYRHFLNRQRLEFWW) are Mitochondrial matrix-facing. The helical transmembrane segment at 67-83 (TIVPMLMLVGLWXPSMI) threads the bilayer. The Mitochondrial intermembrane portion of the chain corresponds to 84 to 242 (NLYYMEEVKR…YFVMWLEALN (159 aa)). Residues His-176, Cys-211, Glu-213, Cys-215, His-219, and Met-222 each coordinate Cu cation. Glu-213 contacts Mg(2+).

Belongs to the cytochrome c oxidase subunit 2 family. In terms of assembly, component of the cytochrome c oxidase (complex IV, CIV), a multisubunit enzyme composed of a catalytic core of 3 subunits and several supernumerary subunits. The complex exists as a monomer or a dimer and forms supercomplexes (SCs) in the inner mitochondrial membrane with ubiquinol-cytochrome c oxidoreductase (cytochrome b-c1 complex, complex III, CIII). The cofactor is Cu cation.

The protein resides in the mitochondrion inner membrane. The enzyme catalyses 4 Fe(II)-[cytochrome c] + O2 + 8 H(+)(in) = 4 Fe(III)-[cytochrome c] + 2 H2O + 4 H(+)(out). Functionally, component of the cytochrome c oxidase, the last enzyme in the mitochondrial electron transport chain which drives oxidative phosphorylation. The respiratory chain contains 3 multisubunit complexes succinate dehydrogenase (complex II, CII), ubiquinol-cytochrome c oxidoreductase (cytochrome b-c1 complex, complex III, CIII) and cytochrome c oxidase (complex IV, CIV), that cooperate to transfer electrons derived from NADH and succinate to molecular oxygen, creating an electrochemical gradient over the inner membrane that drives transmembrane transport and the ATP synthase. Cytochrome c oxidase is the component of the respiratory chain that catalyzes the reduction of oxygen to water. Electrons originating from reduced cytochrome c in the intermembrane space (IMS) are transferred via the dinuclear copper A center (CU(A)) of subunit 2 and heme A of subunit 1 to the active site in subunit 1, a binuclear center (BNC) formed by heme A3 and copper B (CU(B)). The BNC reduces molecular oxygen to 2 water molecules using 4 electrons from cytochrome c in the IMS and 4 protons from the mitochondrial matrix. The sequence is that of Cytochrome c oxidase subunit 2 (COII) from Mytilus edulis (Blue mussel).